The sequence spans 388 residues: Adenosine deaminase-like protein (388 aa).

Residues 1 to 13 (MPNNSKHKKKQQR) show a composition bias toward basic residues. Residues 1–34 (MPNNSKHKKKQQRRQQEAQKKSRAKQIETDKKND) form a disordered region. Residues 14 to 34 (RQQEAQKKSRAKQIETDKKND) show a composition bias toward basic and acidic residues. His65 and His67 together coordinate Zn(2+). N(6)-methyl-AMP contacts are provided by residues His67, His114, 146 to 149 (TSPK), Asp186, and Gly218. His245 provides a ligand contact to Zn(2+). Residues Glu248, Asp326, and Asp327 each contribute to the N(6)-methyl-AMP site. Glu248 (proton donor) is an active-site residue. Zn(2+) is bound at residue Asp326.

Belongs to the metallo-dependent hydrolases superfamily. Adenosine and AMP deaminases family. As to quaternary structure, monomer. The cofactor is Zn(2+).

The enzyme catalyses N(6)-methyl-AMP + H2O + H(+) = IMP + methylamine. Catalyzes the hydrolysis of the free cytosolic methylated adenosine nucleotide N(6)-methyl-AMP (N6-mAMP) to produce inositol monophosphate (IMP) and methylamine. Is required for the catabolism of cytosolic N6-mAMP, which is derived from the degradation of mRNA containing N6-methylated adenine (m6A). In Caenorhabditis elegans, this protein is Adenosine deaminase-like protein.